Consider the following 268-residue polypeptide: Satratoxin biosynthesis SC1 cluster protein 4 (268 aa).

Helical transmembrane passes span 34–54 (VWLV…VHIF), 78–98 (LFAI…GLAI), 113–133 (HLAG…IKIV), and 145–165 (AVIW…APIY).

Belongs to the SAT4 family.

The protein localises to the membrane. It participates in mycotoxin biosynthesis. Part of the satratoxin SC1 cluster involved in the biosynthesis of satratoxins, trichothecene mycotoxins that are associated with human food poisonings. Satratoxins are suggested to be made by products of multiple gene clusters (SC1, SC2 and SC3) that encode 21 proteins in all, including polyketide synthases, acetyltransferases, and other enzymes expected to modify the trichothecene skeleton. SC1 encodes 10 proteins, SAT1 to SAT10. The largest are SAT8, which encodes a putative polyketide synthase (PKS) with a conventional non-reducing architecture, and SAT10, a putative protein containing four ankyrin repeats and thus may be involved in protein scaffolding. The putative short-chain reductase SAT3 may assist the PKS in some capacity. SAT6 contains a secretory lipase domain and acts probably as a trichothecene esterase. SAT5 encodes a putative acetyltransferase, and so, with SAT6, may affect endogenous protection from toxicity. The probable transcription factor SAT9 may regulate the expression of the SC1 cluster. SC2 encodes proteins SAT11 to SAT16, the largest of which encodes the putative reducing PKS SAT13. SAT11 is a cytochrome P450 monooxygenase, while SAT14 and SAT16 are probable acetyltransferases. The SC2 cluster may be regulated by the transcription factor SAT15. SC3 is a small cluster that encodes 5 proteins, SAT17 to SAT21. SAT21 is a putative MFS-type transporter which may have a role in exporting secondary metabolites. The four other proteins putatively encoded in SC3 include the taurine hydroxylase-like protein SAT17, the O-methyltransferase SAT18, the acetyltransferase SAT19, and the Cys6-type zinc finger SAT20, the latter being probably involved in regulation of SC3 expression. The chain is Satratoxin biosynthesis SC1 cluster protein 4 from Stachybotrys chartarum (strain CBS 109288 / IBT 7711) (Toxic black mold).